The chain runs to 266 residues: Protein crossbronx-like (266 aa).

The UBC core domain maps to 15 to 178 (KQGYHILAEY…VQEQAILSRN (164 aa)). The segment at 234-266 (SSRQLDEEEANQVEKLHRGRIPEHQREESEVSL) is disordered. Residues 245–266 (QVEKLHRGRIPEHQREESEVSL) are compositionally biased toward basic and acidic residues.

This sequence belongs to the ubiquitin-conjugating enzyme family. FTS subfamily.

This chain is Protein crossbronx-like, found in Drosophila melanogaster (Fruit fly).